Consider the following 185-residue polypeptide: 16S rRNA aminocarboxypropyltransferase (185 aa).

S-adenosyl-L-methionine is bound by residues threonine 19, isoleucine 69, leucine 93, tyrosine 108, and threonine 112.

This sequence belongs to the TDD superfamily. TSR3 family.

It is found in the cytoplasm. The catalysed reaction is an N(1)-methylpseudouridine in rRNA + S-adenosyl-L-methionine = N(1)-methyl-N(3)-[(3S)-3-amino-3-carboxypropyl]pseudouridine in rRNA + S-methyl-5'-thioadenosine + H(+). Aminocarboxypropyltransferase that catalyzes the aminocarboxypropyl transfer on pseudouridine corresponding to position 914 in M.jannaschii 16S rRNA. It constitutes the last step in biosynthesis of the hypermodified N1-methyl-N3-(3-amino-3-carboxypropyl) pseudouridine (m1acp3-Psi). The sequence is that of 16S rRNA aminocarboxypropyltransferase from Vulcanisaeta distributa (strain DSM 14429 / JCM 11212 / NBRC 100878 / IC-017).